Reading from the N-terminus, the 364-residue chain is Developmentally-regulated GTP-binding protein 2 (364 aa).

Position 21 is a (3S)-3-hydroxylysine (Lys21). In terms of domain architecture, OBG-type G spans 63–288; it reads ARVALIGFPS…LLEMLWEYLA (226 aa). GTP contacts are provided by residues 69 to 76, 94 to 98, 115 to 118, 246 to 249, and 269 to 271; these read GFPSVGKS, FTTLT, DLPG, NKID, and SCG. Mg(2+) is bound by residues Ser76 and Thr96. A TGS domain is found at 288 to 363; that stretch reads ALTCIYTKKR…EHEDVIQIVK (76 aa).

This sequence belongs to the TRAFAC class OBG-HflX-like GTPase superfamily. OBG GTPase family. As to quaternary structure, interacts with RWDD1; this interaction confers protection to polyubiquitination and proteolytic degradation. Interacts with JMJD7; this interaction is direct. Mg(2+) serves as cofactor. Polyubiquitinated. In terms of processing, hydroxylated (with S stereochemistry) at C-3 of Lys-21 by JMJD7.

The protein resides in the nucleus. It is found in the cytoplasm. The catalysed reaction is GTP + H2O = GDP + phosphate + H(+). Functionally, catalyzes the conversion of GTP to GDP through hydrolysis of the gamma-phosphate bond in GTP. When hydroxylated at C-3 of 'Lys-21' by JMJD7, may bind to RNA and play a role in translation. In Bos taurus (Bovine), this protein is Developmentally-regulated GTP-binding protein 2 (DRG2).